We begin with the raw amino-acid sequence, 23 residues long: Protein YsaE (23 aa).

The sequence is that of Protein YsaE from Escherichia coli (strain K12).